Reading from the N-terminus, the 610-residue chain is Elongation factor 4 (610 aa).

Positions 11–193 constitute a tr-type G domain; the sequence is EKIRNFSIIA…QIVEKVPAPT (183 aa). Residues 23 to 28 and 140 to 143 each bind GTP; these read DHGKST and NKID.

This sequence belongs to the TRAFAC class translation factor GTPase superfamily. Classic translation factor GTPase family. LepA subfamily.

It is found in the cell membrane. The catalysed reaction is GTP + H2O = GDP + phosphate + H(+). Functionally, required for accurate and efficient protein synthesis under certain stress conditions. May act as a fidelity factor of the translation reaction, by catalyzing a one-codon backward translocation of tRNAs on improperly translocated ribosomes. Back-translocation proceeds from a post-translocation (POST) complex to a pre-translocation (PRE) complex, thus giving elongation factor G a second chance to translocate the tRNAs correctly. Binds to ribosomes in a GTP-dependent manner. The protein is Elongation factor 4 of Streptococcus pyogenes serotype M6 (strain ATCC BAA-946 / MGAS10394).